Consider the following 185-residue polypeptide: Elongation factor P (185 aa).

It belongs to the elongation factor P family.

It localises to the cytoplasm. Its pathway is protein biosynthesis; polypeptide chain elongation. Its function is as follows. Involved in peptide bond synthesis. Stimulates efficient translation and peptide-bond synthesis on native or reconstituted 70S ribosomes in vitro. Probably functions indirectly by altering the affinity of the ribosome for aminoacyl-tRNA, thus increasing their reactivity as acceptors for peptidyl transferase. In Bacillus velezensis (strain DSM 23117 / BGSC 10A6 / LMG 26770 / FZB42) (Bacillus amyloliquefaciens subsp. plantarum), this protein is Elongation factor P.